The sequence spans 291 residues: Nucleotide-binding protein Ccel_2290 (291 aa).

Residue 8–15 (GMSGAGKS) participates in ATP binding. 59–62 (DIRG) provides a ligand contact to GTP.

This sequence belongs to the RapZ-like family.

Functionally, displays ATPase and GTPase activities. The protein is Nucleotide-binding protein Ccel_2290 of Ruminiclostridium cellulolyticum (strain ATCC 35319 / DSM 5812 / JCM 6584 / H10) (Clostridium cellulolyticum).